The primary structure comprises 430 residues: Adenylosuccinate synthetase (430 aa).

Residues 13–19 and 41–43 each bind GTP; these read GDEGKGK and GHT. Asp-14 functions as the Proton acceptor in the catalytic mechanism. Residues Asp-14 and Gly-41 each contribute to the Mg(2+) site. Residues 14–17, 39–42, Thr-130, Arg-144, Gln-225, Thr-240, and Arg-304 each bind IMP; these read DEGK and NAGH. His-42 functions as the Proton donor in the catalytic mechanism. Residue 300-306 participates in substrate binding; the sequence is ATTGRAR. GTP contacts are provided by residues Arg-306, 332-334, and 414-416; these read KLD and STG.

The protein belongs to the adenylosuccinate synthetase family. As to quaternary structure, homodimer. The cofactor is Mg(2+).

Its subcellular location is the cytoplasm. The enzyme catalyses IMP + L-aspartate + GTP = N(6)-(1,2-dicarboxyethyl)-AMP + GDP + phosphate + 2 H(+). It participates in purine metabolism; AMP biosynthesis via de novo pathway; AMP from IMP: step 1/2. Plays an important role in the de novo pathway of purine nucleotide biosynthesis. Catalyzes the first committed step in the biosynthesis of AMP from IMP. The polypeptide is Adenylosuccinate synthetase (Pseudomonas aeruginosa (strain LESB58)).